The sequence spans 203 residues: Galactoside O-acetyltransferase (203 aa).

Substrate-binding residues include Asp17, Ser71, Asn85, and Asp93. Residue Asn85 coordinates acetyl-CoA. The Proton donor/acceptor role is filled by His115. Acetyl-CoA-binding positions include Ser142, Ala160, 165-166 (TK), Arg180, and Arg183.

It belongs to the transferase hexapeptide repeat family. In terms of assembly, homotrimer. The N-terminus of this protein is heterogeneous because the initiator methionine is only partially cleaved.

The protein localises to the cytoplasm. The catalysed reaction is a beta-D-galactoside + acetyl-CoA = a 6-acetyl-beta-D-galactoside + CoA. In terms of biological role, catalyzes the CoA-dependent transfer of an acetyl group to the 6-O-methyl position of a range of galactosides, glucosides, and lactosides. May assist cellular detoxification by acetylating non-metabolizable pyranosides, thereby preventing their reentry into the cell. This Escherichia coli (strain K12) protein is Galactoside O-acetyltransferase (lacA).